The primary structure comprises 286 residues: Phosphatidylserine decarboxylase proenzyme (286 aa).

Residues D90, H147, and S252 each act as charge relay system; for autoendoproteolytic cleavage activity in the active site. S252 acts as the Schiff-base intermediate with substrate; via pyruvic acid; for decarboxylase activity in catalysis. At S252 the chain carries Pyruvic acid (Ser); by autocatalysis.

This sequence belongs to the phosphatidylserine decarboxylase family. PSD-B subfamily. Prokaryotic type I sub-subfamily. As to quaternary structure, heterodimer of a large membrane-associated beta subunit and a small pyruvoyl-containing alpha subunit. The cofactor is pyruvate. Post-translationally, is synthesized initially as an inactive proenzyme. Formation of the active enzyme involves a self-maturation process in which the active site pyruvoyl group is generated from an internal serine residue via an autocatalytic post-translational modification. Two non-identical subunits are generated from the proenzyme in this reaction, and the pyruvate is formed at the N-terminus of the alpha chain, which is derived from the carboxyl end of the proenzyme. The autoendoproteolytic cleavage occurs by a canonical serine protease mechanism, in which the side chain hydroxyl group of the serine supplies its oxygen atom to form the C-terminus of the beta chain, while the remainder of the serine residue undergoes an oxidative deamination to produce ammonia and the pyruvoyl prosthetic group on the alpha chain. During this reaction, the Ser that is part of the protease active site of the proenzyme becomes the pyruvoyl prosthetic group, which constitutes an essential element of the active site of the mature decarboxylase.

The protein localises to the cell membrane. The catalysed reaction is a 1,2-diacyl-sn-glycero-3-phospho-L-serine + H(+) = a 1,2-diacyl-sn-glycero-3-phosphoethanolamine + CO2. Its pathway is phospholipid metabolism; phosphatidylethanolamine biosynthesis; phosphatidylethanolamine from CDP-diacylglycerol: step 2/2. Its function is as follows. Catalyzes the formation of phosphatidylethanolamine (PtdEtn) from phosphatidylserine (PtdSer). In Azotobacter vinelandii (strain DJ / ATCC BAA-1303), this protein is Phosphatidylserine decarboxylase proenzyme.